Here is a 190-residue protein sequence, read N- to C-terminus: uncharacterized protein (190 aa).

Residues methionine 1 to methionine 58 enclose the HTH tetR-type domain. The segment at residues threonine 21–tyrosine 40 is a DNA-binding region (H-T-H motif).

This is an uncharacterized protein from Bacillus subtilis (strain 168).